Consider the following 417-residue polypeptide: Serine hydroxymethyltransferase 1 (417 aa).

Residues L121 and 125-127 (GHL) each bind (6S)-5,6,7,8-tetrahydrofolate. At K229 the chain carries N6-(pyridoxal phosphate)lysine. 354–356 (SPF) lines the (6S)-5,6,7,8-tetrahydrofolate pocket.

Belongs to the SHMT family. In terms of assembly, homodimer. It depends on pyridoxal 5'-phosphate as a cofactor.

The protein resides in the cytoplasm. It carries out the reaction (6R)-5,10-methylene-5,6,7,8-tetrahydrofolate + glycine + H2O = (6S)-5,6,7,8-tetrahydrofolate + L-serine. It functions in the pathway one-carbon metabolism; tetrahydrofolate interconversion. Its pathway is amino-acid biosynthesis; glycine biosynthesis; glycine from L-serine: step 1/1. Its function is as follows. Catalyzes the reversible interconversion of serine and glycine with tetrahydrofolate (THF) serving as the one-carbon carrier. This reaction serves as the major source of one-carbon groups required for the biosynthesis of purines, thymidylate, methionine, and other important biomolecules. Also exhibits THF-independent aldolase activity toward beta-hydroxyamino acids, producing glycine and aldehydes, via a retro-aldol mechanism. The chain is Serine hydroxymethyltransferase 1 from Pseudomonas savastanoi pv. phaseolicola (strain 1448A / Race 6) (Pseudomonas syringae pv. phaseolicola (strain 1448A / Race 6)).